A 216-amino-acid polypeptide reads, in one-letter code: Chaperone protein TorD (216 aa).

The protein belongs to the TorD/DmsD family. TorD subfamily.

The protein localises to the cytoplasm. In terms of biological role, involved in the biogenesis of TorA. Acts on TorA before the insertion of the molybdenum cofactor and, as a result, probably favors a conformation of the apoenzyme that is competent for acquiring the cofactor. The chain is Chaperone protein TorD from Photobacterium profundum (strain SS9).